We begin with the raw amino-acid sequence, 352 residues long: NAD(P)H pyrophosphatase NUDT13, mitochondrial (352 aa).

Residues 1–20 (MSLYCGIACRRKFFWCYRLL) constitute a mitochondrion transit peptide. The region spanning 196–323 (PQMAPVAITL…PYTQQQNGTF (128 aa)) is the Nudix hydrolase domain. The Nudix box motif lies at 216–240 (RQSSFPKGMYSALAGFCDIGESVEE).

Belongs to the Nudix hydrolase family. The cofactor is Mg(2+). It depends on Mn(2+) as a cofactor. In terms of tissue distribution, highly expressed in metastasis-suppressed chromosome 6 melanoma hybrids.

It localises to the mitochondrion. It catalyses the reaction NADH + H2O = reduced beta-nicotinamide D-ribonucleotide + AMP + 2 H(+). The enzyme catalyses NAD(+) + H2O = beta-nicotinamide D-ribonucleotide + AMP + 2 H(+). The catalysed reaction is NADPH + H2O = reduced beta-nicotinamide D-ribonucleotide + adenosine 2',5'-bisphosphate + 2 H(+). In terms of biological role, NAD(P)H pyrophosphatase that hydrolyzes NADH into NMNH and AMP, and NADPH into NMNH and 2',5'-ADP. Has a marked preference for the reduced pyridine nucleotides. Does not show activity toward NAD-capped RNAs; the NAD-cap is an atypical cap present at the 5'-end of some RNAs. This Homo sapiens (Human) protein is NAD(P)H pyrophosphatase NUDT13, mitochondrial.